Reading from the N-terminus, the 599-residue chain is NTPase KAP family P-loop domain-containing protein 1 (599 aa).

The 416-residue stretch at 1 to 416 folds into the KAP NTPase domain; the sequence is MQQEAAQRES…NTVPITVRLL (416 aa). The next 3 helical transmembrane spans lie at 25 to 45, 119 to 139, and 156 to 176; these read GWGVPKLLWFLVFLQPVITEL, VCLALLALLAALCLGVGLLYL, and ALGGAATTLSGSGLLMAVYSV. Residues 543–599 form a disordered region; the sequence is ALKPPSPPKSPSQDGPQASPRAIIAAGTSHAGQGSGHSKEAHQTRDRTHGGKPRPMA. The segment covering 579-591 has biased composition (basic and acidic residues); it reads HSKEAHQTRDRTH.

It is found in the membrane. This is NTPase KAP family P-loop domain-containing protein 1 (Nkpd1) from Mus musculus (Mouse).